An 85-amino-acid chain; its full sequence is MKIIIFLIVCSFVLIGVKADNGYLLNKYTGCKIWCVINNESCNSECKLRRGNYGYCYFWKLACYCEGAPKSELWAYETNKCNGKM.

Positions methionine 1–alanine 19 are cleaved as a signal peptide. One can recognise an LCN-type CS-alpha/beta domain in the interval aspartate 20–asparagine 82. Intrachain disulfides connect cysteine 31-cysteine 81, cysteine 35-cysteine 56, cysteine 42-cysteine 63, and cysteine 46-cysteine 65.

The protein belongs to the long (4 C-C) scorpion toxin superfamily. Sodium channel inhibitor family. Post-translationally, a possible sulfoxide Met-85 on BmP09 could explain the difference of function between BmK AS-1 and BmP09. Expressed by the venom gland.

The protein localises to the secreted. Beta toxins bind voltage-independently at site-4 of sodium channels (Nav) and shift the voltage of activation toward more negative potentials thereby affecting sodium channel activation and promoting spontaneous and repetitive firing. BmKAs1 also significantly stimulates the binding of [3H]-ryanodine to ryanodine receptors on the sarcoplasmic reticulum of the skeletal muscle. It also displays antinociceptive effect in rat models. Functionally, toxin BmP09 (which may be post-translationally modified) specifically and reversibly blocks large conductance calcium-dependent and voltage-dependent potassium channels (BK) but has no effect on sodium channels. The protein is Beta-toxin BmKAs1 of Olivierus martensii (Manchurian scorpion).